The sequence spans 120 residues: Spermidine export protein MdtJ (120 aa).

Transmembrane regions (helical) follow at residues 1-21 (MFYWILLALAIATEITGTLSM), 31-51 (AGFILMLVMITLSYIFLSFAV), 54-74 (IALGVAYALWEGIGILFITIF), and 81-101 (EALSTMKIAGLLTLVAGIVLI).

It belongs to the drug/metabolite transporter (DMT) superfamily. Small multidrug resistance (SMR) (TC 2.A.7.1) family. MdtJ subfamily. In terms of assembly, forms a complex with MdtI.

Its subcellular location is the cell inner membrane. Its function is as follows. Catalyzes the excretion of spermidine. The sequence is that of Spermidine export protein MdtJ from Salmonella choleraesuis (strain SC-B67).